We begin with the raw amino-acid sequence, 91 residues long: MAVKIRLTRLGSKRNPFYRIVVADARSPRDGRIIEQIGTYNPTSANAPEIKVDEALALKWLNDGAKPTDTVHNILSKEGIMKKFDEQKKAK.

This sequence belongs to the bacterial ribosomal protein bS16 family.

The polypeptide is Small ribosomal subunit protein bS16 (Staphylococcus aureus (strain Mu3 / ATCC 700698)).